The sequence spans 415 residues: Succinate--CoA ligase [GDP-forming] subunit beta, mitochondrial (415 aa).

Residues 1–19 constitute a mitochondrion transit peptide; that stretch reads MLRAAGNLSKSMMKSQRRF. The 231-residue stretch at 28 to 258 folds into the ATP-grasp domain; it reads KEILEKHGCS…SAAYRQKEIF (231 aa). GTP is bound by residues Q39, 72-74, and V130; that span reads GRG. Residues N227 and D241 each coordinate Mg(2+). Substrate-binding positions include N292 and 349 to 351; that span reads GIV.

It belongs to the succinate/malate CoA ligase beta subunit family. GTP-specific subunit beta subfamily. In terms of assembly, heterodimer of an alpha and a beta subunit. The beta subunit determines specificity for GTP. Mg(2+) serves as cofactor.

Its subcellular location is the mitochondrion. The catalysed reaction is GTP + succinate + CoA = succinyl-CoA + GDP + phosphate. Its pathway is carbohydrate metabolism; tricarboxylic acid cycle; succinate from succinyl-CoA (ligase route): step 1/1. Its function is as follows. GTP-specific succinyl-CoA synthetase functions in the citric acid cycle (TCA), coupling the hydrolysis of succinyl-CoA to the synthesis of GTP and thus represents the only step of substrate-level phosphorylation in the TCA. The beta subunit provides nucleotide specificity of the enzyme and binds the substrate succinate, while the binding sites for coenzyme A and phosphate are found in the alpha subunit. The protein is Succinate--CoA ligase [GDP-forming] subunit beta, mitochondrial of Caenorhabditis elegans.